The sequence spans 639 residues: NADP-dependent malic enzyme, chloroplastic (639 aa).

A chloroplast-targeting transit peptide spans 1-49; sequence MLSARAAATAAAAAASPLWKRGEGGSSGSGSGCTSCREVRRRAAAVRVR. The disordered stretch occupies residues 15-34; the sequence is ASPLWKRGEGGSSGSGSGCT. The active-site Proton donor is the Y187. R240 serves as a coordination point for NAD(+). K258 functions as the Proton acceptor in the catalytic mechanism. Residues E330, D331, and D354 each contribute to the a divalent metal cation site. NAD(+) is bound at residue D354. NADP(+) is bound at residue 383–399; that stretch reads LFLGAGEAGTGIAELIA. NAD(+) is bound at residue N495.

The protein belongs to the malic enzymes family. Homotetramer. The cofactor is Mg(2+). Mn(2+) serves as cofactor.

The protein localises to the plastid. It is found in the chloroplast. The enzyme catalyses (S)-malate + NADP(+) = pyruvate + CO2 + NADPH. It carries out the reaction oxaloacetate + H(+) = pyruvate + CO2. It participates in photosynthesis; C4 acid pathway. Functionally, the chloroplastic ME isoform decarboxylates malate shuttled from neighboring mesophyll cells. The CO(2) released is then refixed by ribulose-bisphosphate carboxylase. This pathway eliminates the photorespiratory loss of CO(2) that occurs in most plants. The protein is NADP-dependent malic enzyme, chloroplastic (ME6) of Oryza sativa subsp. japonica (Rice).